Here is a 141-residue protein sequence, read N- to C-terminus: Ubiquitin-like protein ATG12 (141 aa).

A disordered region spans residues 1 to 53 (MSEDSEVVLQLPSAPVGAGGESLPELSPETATPEPPSSAAVSPGTEEPPGDTK). Over residues 23–40 (LPELSPETATPEPPSSAA) the composition is skewed to low complexity. Residue glycine 141 forms a Glycyl lysine isopeptide (Gly-Lys) (interchain with K-? in acceptor protein) linkage.

This sequence belongs to the ATG12 family. Forms a conjugate with ATG5. Part of the minor complex composed of 4 sets of ATG12-ATG5 and ATG16L1 (400 kDa); this complex interacts with ATG3 leading to disruption of ATG7 interaction and promotion of ATG8-like proteins lipidation. Forms an 800-kDa complex composed of ATG12-ATG5 and ATG16L2. Interacts with DHX58/RIG-1, IFIH1/MDA5 and MAVS/IPS-1 in monomeric form as well as in ATG12-ATG5 conjugate. The interaction with MAVS is further enhanced upon vesicular stomatitis virus (VSV) infection. Interacts with ATG3; this interaction is essential for phosphatidylethanolamine (PE)-conjugated ATG8-like proteins formation. Interacts with ATG7. Interacts with ATG10. The ATG12-ATG5 conjugate interacts with RAB33A; this interaction is bridged by ATG16L1 and promotes ATG12-ATG5-ATG16L1 complex recruitment to phagophores. Interacts with TECPR1. Interacts with SH3BGRL. The ATG12-ATG5 conjugate interacts with PDCD6IP (via the BRO1 domain); this interaction is bridged by ATG12 and promotes multiple PDCD6IP-mediated functions such as endolysosomal trafficking, macroautophagy and exosome biogenesis. Post-translationally, acetylated by EP300. As to expression, ubiquitous.

The protein resides in the cytoplasm. It localises to the preautophagosomal structure membrane. Ubiquitin-like protein involved in autophagy vesicles formation. Conjugation with ATG5 through a ubiquitin-like conjugating system involving also ATG7 as an E1-like activating enzyme and ATG10 as an E2-like conjugating enzyme, is essential for its function. The ATG12-ATG5 conjugate acts as an E3-like enzyme which is required for lipidation of ATG8 family proteins and their association to the vesicle membranes. As part of the ATG8 conjugation system with ATG5 and ATG16L1, required for recruitment of LRRK2 to stressed lysosomes and induction of LRRK2 kinase activity in response to lysosomal stress. Its function is as follows. (Microbial infection) May act as a proviral factor. In association with ATG5, negatively regulates the innate antiviral immune response by impairing the type I IFN production pathway upon vesicular stomatitis virus (VSV) infection. The polypeptide is Ubiquitin-like protein ATG12 (Mus musculus (Mouse)).